The sequence spans 193 residues: MIFNFLNKASNKTHTKLLLFSSIRNRILINNISSTSKWSSINNNNKQSSVSKTNIFIITTHNKQQQQLSKSFSTINNNTKPISDVNLFHDIVDEEFELFVDRLEILSEANTCEGFEVEGNDGVLTIIVGNKGTYVINKQTPNRQIWWSSPLSGPKRFDYDSVEKRWVDNRDGTPLRQLLNSEINTLCKYDMEI.

Residues 1–72 (MIFNFLNKAS…KQQQQLSKSF (72 aa)) constitute a mitochondrion transit peptide.

The protein belongs to the frataxin family. As to quaternary structure, monomer. Oligomer.

Its subcellular location is the mitochondrion. The enzyme catalyses 4 Fe(2+) + O2 + 4 H(+) = 4 Fe(3+) + 2 H2O. In terms of biological role, promotes the biosynthesis of heme as well as the assembly and repair of iron-sulfur clusters by delivering Fe(2+) to proteins involved in these pathways. May play a role in the protection against iron-catalyzed oxidative stress through its ability to catalyze the oxidation of Fe(2+) to Fe(3+). May be able to store large amounts of the metal in the form of a ferrihydrite mineral by oligomerization. This Dictyostelium discoideum (Social amoeba) protein is Frataxin, mitochondrial (fxn).